Consider the following 167-residue polypeptide: Peptide deformylase (167 aa).

Fe cation is bound by residues Cys-91 and His-133. Glu-134 is a catalytic residue. His-137 provides a ligand contact to Fe cation.

The protein belongs to the polypeptide deformylase family. It depends on Fe(2+) as a cofactor.

The enzyme catalyses N-terminal N-formyl-L-methionyl-[peptide] + H2O = N-terminal L-methionyl-[peptide] + formate. Functionally, removes the formyl group from the N-terminal Met of newly synthesized proteins. Requires at least a dipeptide for an efficient rate of reaction. N-terminal L-methionine is a prerequisite for activity but the enzyme has broad specificity at other positions. In Baumannia cicadellinicola subsp. Homalodisca coagulata, this protein is Peptide deformylase.